A 445-amino-acid polypeptide reads, in one-letter code: Homoserine dehydrogenase (445 aa).

Phe-26, Thr-28, and Val-29 together coordinate NADPH. Residues Val-29 and Ala-58 each contribute to the NAD(+) site. Val-29 serves as a coordination point for NADP(+). Lys-119 is a binding site for NADPH. Residue Lys-119 participates in NADP(+) binding. 4 residues coordinate Na(+): Glu-143, Val-146, Gly-148, and Ile-150. NADP(+) contacts are provided by Gly-201 and Glu-204. Glu-204 and Asp-215 together coordinate L-homoserine. Lys-219 (proton donor) is an active-site residue. Position 321 (Gly-321) interacts with NADPH. Residue Gly-321 participates in NAD(+) binding. Gly-321 is a binding site for NADP(+). One can recognise an ACT domain in the interval 368 to 445; the sequence is HLDMDVEDRV…INSVIRLERD (78 aa).

The protein belongs to the homoserine dehydrogenase family. It depends on a metal cation as a cofactor.

The catalysed reaction is L-homoserine + NADP(+) = L-aspartate 4-semialdehyde + NADPH + H(+). The enzyme catalyses L-homoserine + NAD(+) = L-aspartate 4-semialdehyde + NADH + H(+). It participates in amino-acid biosynthesis; L-methionine biosynthesis via de novo pathway; L-homoserine from L-aspartate: step 3/3. It functions in the pathway amino-acid biosynthesis; L-threonine biosynthesis; L-threonine from L-aspartate: step 3/5. Feedback inhibition by threonine. In terms of biological role, catalyzes the conversion of L-aspartate-beta-semialdehyde (L-Asa) to L-homoserine (L-Hse), the third step in the biosynthesis of threonine and methionine from aspartate. The sequence is that of Homoserine dehydrogenase (hom) from Corynebacterium glutamicum (strain ATCC 13032 / DSM 20300 / JCM 1318 / BCRC 11384 / CCUG 27702 / LMG 3730 / NBRC 12168 / NCIMB 10025 / NRRL B-2784 / 534).